The primary structure comprises 628 residues: (-)-beta-pinene synthase 1, chloroplastic (628 aa).

A chloroplast-targeting transit peptide spans 1-51 (MDLISVLPSASKSCVCLHKPLSSSTHKLKPFCRTIRILGMPRPRKSVLMVS). Mg(2+) contacts are provided by D379, D383, and D531. The short motif at 379–383 (DDMYD) is the DDXXD motif element.

It belongs to the terpene synthase family. Tpsd subfamily. It depends on Mg(2+) as a cofactor. Requires Mn(2+) as cofactor.

The protein resides in the plastid. It is found in the chloroplast. It catalyses the reaction (2E)-geranyl diphosphate = (1S,5S)-beta-pinene + diphosphate. It carries out the reaction (2E)-geranyl diphosphate = (1S,5S)-alpha-pinene + diphosphate. Its pathway is terpene metabolism; oleoresin biosynthesis. It functions in the pathway secondary metabolite biosynthesis; terpenoid biosynthesis. In terms of biological role, monoterpene synthase (TPS) involved in the biosynthesis of monoterpene natural products included in conifer oleoresin secretions and volatile emissions; these compounds contribute to biotic and abiotic stress defense against herbivores and pathogens. Catalyzes the conversion of (2E)-geranyl diphosphate (GPP) to (-)-beta-pinene and, to a lower extent, to (-)-alpha-pinene. This is (-)-beta-pinene synthase 1, chloroplastic from Pinus banksiana (Jack pine).